An 89-amino-acid chain; its full sequence is MSLSAIDTKKIILKYGKSEQNSGITEVQVVLLTNQINYLQIHFSQHKKDHCSRRGLLNMVSKRRKLLDYLKKKNISRYSALIEDLHLRR.

This sequence belongs to the universal ribosomal protein uS15 family. Part of the 30S ribosomal subunit. Forms a bridge to the 50S subunit in the 70S ribosome, contacting the 23S rRNA.

Functionally, one of the primary rRNA binding proteins, it binds directly to 16S rRNA where it helps nucleate assembly of the platform of the 30S subunit by binding and bridging several RNA helices of the 16S rRNA. Forms an intersubunit bridge (bridge B4) with the 23S rRNA of the 50S subunit in the ribosome. In Buchnera aphidicola subsp. Acyrthosiphon pisum (strain 5A), this protein is Small ribosomal subunit protein uS15.